The chain runs to 442 residues: MSSRDFSNDLFSINIEENAGCVVSAKVQANPLVTQKCHKEALKTVKKNVVLPGFRKGKAPDNIVESRYSTQVEQELRRLFLRASFEALSQMCDRKPLSPKAVRSSAIDTCNPVNGGSVSFLYEAFPVIPSLPWEQLSLPDPEPVKEISEEDLENGLKNVAYFFATKTPVTRPSQEGDFISLSLYVSKRGDENSTPVAIFENKYFKISEEDMTDSFKARFLNVSTGHRVEEEIGSEDIQSFLNGDLLTFTVNAVIEISSPEMDDEKARQLQAESLEDLKKKLRIQLENQAKEAQHQKRFSDAEDALAQLIDFDLPESLLQEREELLSREKLLNARLVKYCSDSELEEQKQALLEEAKADARKAVKLLFLTQKVFSEKGLSISREELQYMMDVCSRERFGGYPPKDISNEMIQELVLVARDRLTYRKAIEAISSEKKDLEVVPS.

The 84-residue stretch at 176 to 259 folds into the PPIase FKBP-type domain; sequence GDFISLSLYV…VNAVIEISSP (84 aa).

Belongs to the FKBP-type PPIase family. Tig subfamily.

It localises to the cytoplasm. It carries out the reaction [protein]-peptidylproline (omega=180) = [protein]-peptidylproline (omega=0). In terms of biological role, involved in protein export. Acts as a chaperone by maintaining the newly synthesized protein in an open conformation. Functions as a peptidyl-prolyl cis-trans isomerase. The protein is Trigger factor of Chlamydia trachomatis serovar A (strain ATCC VR-571B / DSM 19440 / HAR-13).